The primary structure comprises 562 residues: Protein FAM222B (562 aa).

2 stretches are compositionally biased toward low complexity: residues 147-167 (PQAQ…LAHA) and 183-201 (ALSH…HPQQ). 2 disordered regions span residues 147–242 (PQAQ…PPNV) and 537–562 (AHRA…PGYR).

It belongs to the FAM222 family.

In Mus musculus (Mouse), this protein is Protein FAM222B (Fam222b).